We begin with the raw amino-acid sequence, 91 residues long: Small ribosomal subunit protein uS15 (91 aa).

Belongs to the universal ribosomal protein uS15 family. As to quaternary structure, part of the 30S ribosomal subunit. Forms a bridge to the 50S subunit in the 70S ribosome, contacting the 23S rRNA.

In terms of biological role, one of the primary rRNA binding proteins, it binds directly to 16S rRNA where it helps nucleate assembly of the platform of the 30S subunit by binding and bridging several RNA helices of the 16S rRNA. Functionally, forms an intersubunit bridge (bridge B4) with the 23S rRNA of the 50S subunit in the ribosome. The polypeptide is Small ribosomal subunit protein uS15 (Sulfurimonas denitrificans (strain ATCC 33889 / DSM 1251) (Thiomicrospira denitrificans (strain ATCC 33889 / DSM 1251))).